A 366-amino-acid polypeptide reads, in one-letter code: Peptide chain release factor 1 (366 aa).

The residue at position 239 (Gln-239) is an N5-methylglutamine.

This sequence belongs to the prokaryotic/mitochondrial release factor family. Methylated by PrmC. Methylation increases the termination efficiency of RF1.

The protein resides in the cytoplasm. Its function is as follows. Peptide chain release factor 1 directs the termination of translation in response to the peptide chain termination codons UAG and UAA. The sequence is that of Peptide chain release factor 1 from Baumannia cicadellinicola subsp. Homalodisca coagulata.